The sequence spans 300 residues: Type II restriction enzyme HindIII (300 aa).

It carries out the reaction Endonucleolytic cleavage of DNA to give specific double-stranded fragments with terminal 5'-phosphates.. A P subtype restriction enzyme that recognizes the double-stranded sequence 5'-AAGCTT-3' and cleaves after A-1. This chain is Type II restriction enzyme HindIII, found in Haemophilus influenzae (strain ATCC 51907 / DSM 11121 / KW20 / Rd).